A 279-amino-acid chain; its full sequence is Pantothenate synthetase (279 aa).

ATP is bound at residue 26-33 (MGNLHEGH). H33 functions as the Proton donor in the catalytic mechanism. Q57 is a binding site for (R)-pantoate. Q57 contacts beta-alanine. Residue 144–147 (GKKD) coordinates ATP. Q150 contributes to the (R)-pantoate binding site. ATP-binding positions include V173 and 181–184 (LSSR).

It belongs to the pantothenate synthetase family. In terms of assembly, homodimer.

It localises to the cytoplasm. The enzyme catalyses (R)-pantoate + beta-alanine + ATP = (R)-pantothenate + AMP + diphosphate + H(+). It functions in the pathway cofactor biosynthesis; (R)-pantothenate biosynthesis; (R)-pantothenate from (R)-pantoate and beta-alanine: step 1/1. Functionally, catalyzes the condensation of pantoate with beta-alanine in an ATP-dependent reaction via a pantoyl-adenylate intermediate. In Burkholderia ambifaria (strain ATCC BAA-244 / DSM 16087 / CCUG 44356 / LMG 19182 / AMMD) (Burkholderia cepacia (strain AMMD)), this protein is Pantothenate synthetase.